The primary structure comprises 154 residues: Sperm microtubule associated protein 1 (154 aa).

This is Sperm microtubule associated protein 1 from Homo sapiens (Human).